A 257-amino-acid polypeptide reads, in one-letter code: UPF0246 protein SO_3540 (257 aa).

This sequence belongs to the UPF0246 family.

The protein is UPF0246 protein SO_3540 of Shewanella oneidensis (strain ATCC 700550 / JCM 31522 / CIP 106686 / LMG 19005 / NCIMB 14063 / MR-1).